A 231-amino-acid chain; its full sequence is 5'-methylthioadenosine/S-adenosylhomocysteine nucleosidase (231 aa).

Glu-12 functions as the Proton acceptor in the catalytic mechanism. Substrate is bound by residues Gly-78, Met-153, and 174-175 (ME). Residue Asp-198 is the Proton donor of the active site.

It belongs to the PNP/UDP phosphorylase family. MtnN subfamily.

The enzyme catalyses S-adenosyl-L-homocysteine + H2O = S-(5-deoxy-D-ribos-5-yl)-L-homocysteine + adenine. It carries out the reaction S-methyl-5'-thioadenosine + H2O = 5-(methylsulfanyl)-D-ribose + adenine. It catalyses the reaction 5'-deoxyadenosine + H2O = 5-deoxy-D-ribose + adenine. It participates in amino-acid biosynthesis; L-methionine biosynthesis via salvage pathway; S-methyl-5-thio-alpha-D-ribose 1-phosphate from S-methyl-5'-thioadenosine (hydrolase route): step 1/2. Catalyzes the irreversible cleavage of the glycosidic bond in both 5'-methylthioadenosine (MTA) and S-adenosylhomocysteine (SAH/AdoHcy) to adenine and the corresponding thioribose, 5'-methylthioribose and S-ribosylhomocysteine, respectively. Also cleaves 5'-deoxyadenosine, a toxic by-product of radical S-adenosylmethionine (SAM) enzymes, into 5-deoxyribose and adenine. The polypeptide is 5'-methylthioadenosine/S-adenosylhomocysteine nucleosidase (Bacillus cereus (strain G9842)).